Consider the following 524-residue polypeptide: Probable metalloreductase AIM14 (524 aa).

7 consecutive transmembrane segments (helical) span residues 24–44, 69–89, 104–121, 143–163, 179–199, 206–226, and 230–250; these read VNIKYGYVILALSIVHMVLSI, SIPFWVSTLVWLAIFAFLSIF, RLGRMAYCLVPFTIFISL, WISRLIFATAIGHGLGFLYKW, FLGVTVFALMPVLIFASVNVM, LFYILHNVTLWMFVVLIAFHA, and VPLLAVINLALLGYQIYQRFF. The Ferric oxidoreductase domain occupies 105 to 222; it reads LGRMAYCLVP…VTLWMFVVLI (118 aa). Positions 248 to 372 constitute an FAD-binding FR-type domain; the sequence is RFFKSYYLHD…GGSGISFGLP (125 aa).

It belongs to the ferric reductase (FRE) family. AIM14 subfamily.

It localises to the membrane. Probable cell surface metalloreductase. May be involved in iron or copper homeostasis. This chain is Probable metalloreductase AIM14 (AIM14), found in Scheffersomyces stipitis (strain ATCC 58785 / CBS 6054 / NBRC 10063 / NRRL Y-11545) (Yeast).